The primary structure comprises 200 residues: ATP-dependent Clp protease proteolytic subunit (200 aa).

Ser101 functions as the Nucleophile in the catalytic mechanism. Residue His126 is part of the active site.

This sequence belongs to the peptidase S14 family. In terms of assembly, component of the chloroplastic Clp protease core complex.

Its subcellular location is the plastid. The protein localises to the chloroplast stroma. It carries out the reaction Hydrolysis of proteins to small peptides in the presence of ATP and magnesium. alpha-casein is the usual test substrate. In the absence of ATP, only oligopeptides shorter than five residues are hydrolyzed (such as succinyl-Leu-Tyr-|-NHMec, and Leu-Tyr-Leu-|-Tyr-Trp, in which cleavage of the -Tyr-|-Leu- and -Tyr-|-Trp bonds also occurs).. Cleaves peptides in various proteins in a process that requires ATP hydrolysis. Has a chymotrypsin-like activity. Plays a major role in the degradation of misfolded proteins. The chain is ATP-dependent Clp protease proteolytic subunit from Ostreococcus tauri.